A 754-amino-acid polypeptide reads, in one-letter code: Photosystem I P700 chlorophyll a apoprotein A1 (754 aa).

8 helical membrane passes run 72 to 95, 158 to 181, 197 to 221, 293 to 311, 351 to 374, 390 to 416, 438 to 460, and 535 to 553; these read IFSA…FHGA, LYCT…FHYH, MNHH…HVSL, TAHH…GHMY, WHAQ…HHMY, LSLF…IFMV, AIIS…LYIH, and FMVH…LILL. [4Fe-4S] cluster-binding residues include cysteine 577 and cysteine 586. A run of 2 helical transmembrane segments spans residues 593–614 and 668–690; these read HVFL…HFSW and LSAY…MFLF. Histidine 679 is a chlorophyll a' binding site. The chlorophyll a site is built by methionine 687 and tyrosine 695. A phylloquinone-binding site is contributed by tryptophan 696. Residues 728 to 748 traverse the membrane as a helical segment; the sequence is AVGVAHYLLGGIVTTWAFFLA.

Belongs to the PsaA/PsaB family. As to quaternary structure, the PsaA/B heterodimer binds the P700 chlorophyll special pair and subsequent electron acceptors. PSI consists of a core antenna complex that captures photons, and an electron transfer chain that converts photonic excitation into a charge separation. The cyanobacterial PSI reaction center is composed of one copy each of PsaA,B,C,D,E,F,I,J,K,L,M and X, and forms trimeric complexes. Requires PSI electron transfer chain: 5 chlorophyll a, 1 chlorophyll a', 2 phylloquinones and 3 4Fe-4S clusters. PSI core antenna: 90 chlorophyll a, 22 carotenoids, 3 phospholipids and 1 galactolipid. P700 is a chlorophyll a/chlorophyll a' dimer, A0 is one or more chlorophyll a, A1 is one or both phylloquinones and FX is a shared 4Fe-4S iron-sulfur center. as cofactor.

Its subcellular location is the cellular thylakoid membrane. It catalyses the reaction reduced [plastocyanin] + hnu + oxidized [2Fe-2S]-[ferredoxin] = oxidized [plastocyanin] + reduced [2Fe-2S]-[ferredoxin]. PsaA and PsaB bind P700, the primary electron donor of photosystem I (PSI), as well as the electron acceptors A0, A1 and FX. PSI is a plastocyanin/cytochrome c6-ferredoxin oxidoreductase, converting photonic excitation into a charge separation, which transfers an electron from the donor P700 chlorophyll pair to the spectroscopically characterized acceptors A0, A1, FX, FA and FB in turn. Oxidized P700 is reduced on the lumenal side of the thylakoid membrane by plastocyanin or cytochrome c6. This chain is Photosystem I P700 chlorophyll a apoprotein A1, found in Rippkaea orientalis (strain PCC 8801 / RF-1) (Cyanothece sp. (strain PCC 8801)).